Here is a 308-residue protein sequence, read N- to C-terminus: Probable 5-dehydro-4-deoxyglucarate dehydratase (308 aa).

Belongs to the DapA family.

The enzyme catalyses 5-dehydro-4-deoxy-D-glucarate + H(+) = 2,5-dioxopentanoate + CO2 + H2O. It participates in carbohydrate acid metabolism; D-glucarate degradation; 2,5-dioxopentanoate from D-glucarate: step 2/2. In Oceanobacillus iheyensis (strain DSM 14371 / CIP 107618 / JCM 11309 / KCTC 3954 / HTE831), this protein is Probable 5-dehydro-4-deoxyglucarate dehydratase.